The chain runs to 286 residues: MASLRDIKAKINSTKKTSQITKAMEMVSASKLNRAEQNAKSFVPYMEKIQEVVASIAQGSKGINHPMLNARPVKRTGYIVITSDRGLAGGYNSNVLRTVSNVIRERHNMDSNQYSIIVLGRLGRDYLKRRGFNIIDEVVGLSDHPSFTDIKDLASRAIAMFADGAYDELYIYYNHYVSKISQEVTENKILPLTDVASDKPTTAYEFEPSEEEILKVLLPQYAESLVYGALLDGKASEHAARMTAMKSATDNAMEVIDSLTLSFNRARQAAITQEITEIVGGAAALE.

This sequence belongs to the ATPase gamma chain family. As to quaternary structure, F-type ATPases have 2 components, CF(1) - the catalytic core - and CF(0) - the membrane proton channel. CF(1) has five subunits: alpha(3), beta(3), gamma(1), delta(1), epsilon(1). CF(0) has three main subunits: a, b and c.

The protein resides in the cell membrane. Its function is as follows. Produces ATP from ADP in the presence of a proton gradient across the membrane. The gamma chain is believed to be important in regulating ATPase activity and the flow of protons through the CF(0) complex. In Bacillus anthracis (strain A0248), this protein is ATP synthase gamma chain.